Here is a 347-residue protein sequence, read N- to C-terminus: Holliday junction branch migration complex subunit RuvB (347 aa).

Residues 1–183 form a large ATPase domain (RuvB-L) region; that stretch reads MTPPSRIVTP…FGIPIRLNFY (183 aa). ATP is bound by residues Leu22, Arg23, Gly64, Lys67, Thr68, Thr69, 130 to 132, Arg173, Tyr183, and Arg220; that span reads EDF. Thr68 provides a ligand contact to Mg(2+). A small ATPAse domain (RuvB-S) region spans residues 184 to 254; the sequence is TVEELEGIVS…IADHALSALE (71 aa). Residues 257 to 347 form a head domain (RuvB-H) region; the sequence is AAGLDAMDRR…QFGLFGGDEE (91 aa). Residues Arg293, Arg312, and Arg317 each coordinate DNA.

This sequence belongs to the RuvB family. Homohexamer. Forms an RuvA(8)-RuvB(12)-Holliday junction (HJ) complex. HJ DNA is sandwiched between 2 RuvA tetramers; dsDNA enters through RuvA and exits via RuvB. An RuvB hexamer assembles on each DNA strand where it exits the tetramer. Each RuvB hexamer is contacted by two RuvA subunits (via domain III) on 2 adjacent RuvB subunits; this complex drives branch migration. In the full resolvosome a probable DNA-RuvA(4)-RuvB(12)-RuvC(2) complex forms which resolves the HJ.

It is found in the cytoplasm. The enzyme catalyses ATP + H2O = ADP + phosphate + H(+). Functionally, the RuvA-RuvB-RuvC complex processes Holliday junction (HJ) DNA during genetic recombination and DNA repair, while the RuvA-RuvB complex plays an important role in the rescue of blocked DNA replication forks via replication fork reversal (RFR). RuvA specifically binds to HJ cruciform DNA, conferring on it an open structure. The RuvB hexamer acts as an ATP-dependent pump, pulling dsDNA into and through the RuvAB complex. RuvB forms 2 homohexamers on either side of HJ DNA bound by 1 or 2 RuvA tetramers; 4 subunits per hexamer contact DNA at a time. Coordinated motions by a converter formed by DNA-disengaged RuvB subunits stimulates ATP hydrolysis and nucleotide exchange. Immobilization of the converter enables RuvB to convert the ATP-contained energy into a lever motion, pulling 2 nucleotides of DNA out of the RuvA tetramer per ATP hydrolyzed, thus driving DNA branch migration. The RuvB motors rotate together with the DNA substrate, which together with the progressing nucleotide cycle form the mechanistic basis for DNA recombination by continuous HJ branch migration. Branch migration allows RuvC to scan DNA until it finds its consensus sequence, where it cleaves and resolves cruciform DNA. The polypeptide is Holliday junction branch migration complex subunit RuvB (Rhodopseudomonas palustris (strain BisA53)).